Reading from the N-terminus, the 290-residue chain is 4-hydroxybenzoate octaprenyltransferase (290 aa).

A run of 8 helical transmembrane segments spans residues 23–43, 46–66, 99–119, 141–161, 163–183, 212–232, 233–253, and 268–288; these read IGAL…TPGM, LWIL…GCVV, LFVV…AMTI, LPQV…FAAV, ESLP…AVAY, TLII…IGWL, NGLG…FVYQ, and AFMN…MSYW.

Belongs to the UbiA prenyltransferase family. It depends on Mg(2+) as a cofactor.

The protein localises to the cell inner membrane. It catalyses the reaction all-trans-octaprenyl diphosphate + 4-hydroxybenzoate = 4-hydroxy-3-(all-trans-octaprenyl)benzoate + diphosphate. It participates in cofactor biosynthesis; ubiquinone biosynthesis. In terms of biological role, catalyzes the prenylation of para-hydroxybenzoate (PHB) with an all-trans polyprenyl group. Mediates the second step in the final reaction sequence of ubiquinone-8 (UQ-8) biosynthesis, which is the condensation of the polyisoprenoid side chain with PHB, generating the first membrane-bound Q intermediate 3-octaprenyl-4-hydroxybenzoate. The polypeptide is 4-hydroxybenzoate octaprenyltransferase (Salmonella paratyphi C (strain RKS4594)).